A 181-amino-acid polypeptide reads, in one-letter code: MKQQGVTIWLTGLSGAGKTTITHALEQKLREAGYALEVLDGDIVRTNLTKGLGFSKEDRDTNIRRIGFVANLLTRNGVIVLVSAISPYRDIRDEVRGTIGNFVEVFVNAPLNVCEERDVKGLYKKARAGEIKSFTGIDDPYEPPLNPEIECRTDLETLEESVTKIWQKLEELGYLAKPVAI.

An ATP-binding site is contributed by 12–19 (GLSGAGKT). Catalysis depends on Ser-86, which acts as the Phosphoserine intermediate.

This sequence belongs to the APS kinase family.

It catalyses the reaction adenosine 5'-phosphosulfate + ATP = 3'-phosphoadenylyl sulfate + ADP + H(+). Its pathway is sulfur metabolism; hydrogen sulfide biosynthesis; sulfite from sulfate: step 2/3. Catalyzes the synthesis of activated sulfate. The chain is Adenylyl-sulfate kinase from Rippkaea orientalis (strain PCC 8801 / RF-1) (Cyanothece sp. (strain PCC 8801)).